The primary structure comprises 505 residues: MTAQASEARELAAVIGLEVHVQLETETKIFCGCSTDVADAEPNTHTCPVCLGLPGALPVVNEGAVEAAVKVGKAIDADIPAETTFHRKNYYYPDLPKNFQITQYDSPICQDGELEFSVESERRSVDIRRAHLEEDPGSIKHVREGSGPLESRTCSIERADYTLIDYNRAGTPLMEIVTEPDFRAPGEVRSFLEKLEEVLEYLGVFDATRDGSLRIDANLSLVDASEVGEDGDIDKSVLEDANRTEVKNISSHKGAEQALSFEASRQRKLIQSGRAVEQETRHFNETHGNTVSMRSKEEEKDYRYFREADLPPLRVSHWKDEVPIPELPDARRERFVEEYGLSEEAASKLTSTKQVADFFEDVAERFDANLAATWVADNLLGELNYRDMAITDIDDRFDEVTQLVALVAEDEITAKNAHETVLREMLDTGDDPDTVVDREGLGKTSGDEVQQAVVEAIDENPDAVEDYHSGEGGAINFLVGQVMEKTGGSADPGDVNGLLREELES.

This sequence belongs to the GatB/GatE family. GatB subfamily. As to quaternary structure, heterotrimer of A, B and C subunits.

It catalyses the reaction L-glutamyl-tRNA(Gln) + L-glutamine + ATP + H2O = L-glutaminyl-tRNA(Gln) + L-glutamate + ADP + phosphate + H(+). The enzyme catalyses L-aspartyl-tRNA(Asn) + L-glutamine + ATP + H2O = L-asparaginyl-tRNA(Asn) + L-glutamate + ADP + phosphate + 2 H(+). Allows the formation of correctly charged Asn-tRNA(Asn) or Gln-tRNA(Gln) through the transamidation of misacylated Asp-tRNA(Asn) or Glu-tRNA(Gln) in organisms which lack either or both of asparaginyl-tRNA or glutaminyl-tRNA synthetases. The reaction takes place in the presence of glutamine and ATP through an activated phospho-Asp-tRNA(Asn) or phospho-Glu-tRNA(Gln). The polypeptide is Aspartyl/glutamyl-tRNA(Asn/Gln) amidotransferase subunit B (Haloarcula marismortui (strain ATCC 43049 / DSM 3752 / JCM 8966 / VKM B-1809) (Halobacterium marismortui)).